A 95-amino-acid chain; its full sequence is UPF0235 protein Sama_2480 (95 aa).

This sequence belongs to the UPF0235 family.

The polypeptide is UPF0235 protein Sama_2480 (Shewanella amazonensis (strain ATCC BAA-1098 / SB2B)).